Here is a 604-residue protein sequence, read N- to C-terminus: Prostaglandin G/H synthase 2 (604 aa).

Residues 1–17 form the signal peptide; sequence MLARALLLCAVLALSHT. In terms of domain architecture, EGF-like spans 18-55; that stretch reads ANPCCSHPCQNRGVCMSVGFDQYKCDCTRTGFYGENCS. Cystine bridges form between C21–C32, C22–C145, C26–C42, and C44–C54. N53 carries N-linked (GlcNAc...) asparagine glycosylation. R106 lines the substrate pocket. The N-linked (GlcNAc...) asparagine glycan is linked to N130. The active-site Proton acceptor is H193. Substrate is bound at residue Y341. The For cyclooxygenase activity role is filled by Y371. A heme b-binding site is contributed by H374. The N-linked (GlcNAc...) asparagine glycan is linked to N396. C526 carries the S-nitrosocysteine modification. The cysteines at positions 555 and 561 are disulfide-linked. An O-acetylserine modification is found at S565. N580 is a glycosylation site (N-linked (GlcNAc...) asparagine).

Belongs to the prostaglandin G/H synthase family. In terms of assembly, homodimer. It depends on heme b as a cofactor. S-nitrosylation by NOS2 (iNOS) activates enzyme activity. S-nitrosylation may take place on different Cys residues in addition to Cys-526. In terms of processing, acetylated at Ser-565 by SPHK1. During neuroinflammation, acetylation by SPHK1 promotes neuronal secretion of specialized preresolving mediators (SPMs), especially 15-R-lipoxin A4, which results in an increase of phagocytic microglia.

Its subcellular location is the microsome membrane. The protein resides in the endoplasmic reticulum membrane. It is found in the nucleus inner membrane. It localises to the nucleus outer membrane. It carries out the reaction (5Z,8Z,11Z,14Z)-eicosatetraenoate + AH2 + 2 O2 = prostaglandin H2 + A + H2O. The catalysed reaction is (5Z,8Z,11Z,14Z)-eicosatetraenoate + 2 O2 = prostaglandin G2. The enzyme catalyses prostaglandin G2 + AH2 = prostaglandin H2 + A + H2O. It catalyses the reaction (5Z,8Z,11Z,14Z,17Z)-eicosapentaenoate + 2 O2 = prostaglandin G3. It carries out the reaction prostaglandin G3 + AH2 = prostaglandin H3 + A + H2O. The catalysed reaction is (8Z,11Z,14Z)-eicosatrienoate + 2 O2 = prostaglandin G1. The enzyme catalyses prostaglandin G1 + AH2 = prostaglandin H1 + A + H2O. It catalyses the reaction 2-(5Z,8Z,11Z,14Z)-eicosatetraenoyl-sn-glycero-3-phosphoethanolamine + 2 O2 = 2-(prostaglandin G2)-sn-glycero-3-phosphoethanolamine. It carries out the reaction 2-(prostaglandin G2)-sn-glycero-3-phosphoethanolamine + AH2 = 2-(prostaglandin H2)-sn-glycero-3-phosphoethanolamine + A + H2O. The catalysed reaction is 2-(5Z,8Z,11Z,14Z)-eicosatetraenoyl-sn-glycero-3-phosphocholine + 2 O2 = 2-(prostaglandin G2)-sn-glycero-3-phosphocholine. The enzyme catalyses 2-(prostaglandin G2)-sn-glycero-3-phosphocholine + AH2 = 2-(prostaglandin H2)-sn-glycero-3-phosphocholine + A + H2O. It catalyses the reaction (15S)-hydroperoxy-(5Z,8Z,11Z,13E)-eicosatetraenoate + AH2 = (15S)-hydroxy-(5Z,8Z,11Z,13E)-eicosatetraenoate + A + H2O. It carries out the reaction 2-(5Z,8Z,11Z,14Z)-eicosatetraenoyl-sn-glycero-3-phosphocholine + AH2 + O2 = 2-[(15S)-hydroxy-(5Z,8Z,11Z,13E)-eicosatetraenoyl]-sn-glycero-3-phosphocholine + A + H2O. The catalysed reaction is 2-(5Z,8Z,11Z,14Z)-eicosatetraenoyl-sn-glycero-3-phosphocholine + AH2 + O2 = 2-[(15R)-hydroxy-(5Z,8Z,11Z,13E)-eicosatetraenoyl]-sn-glycero-3-phosphocholine + A + H2O. The enzyme catalyses 2-(5Z,8Z,11Z,14Z)-eicosatetraenoyl-sn-glycero-3-phosphocholine + AH2 + O2 = 2-[(11R)-hydroxy-(5Z,8Z,12E,14Z)-eicosatetraenoyl]-sn-glycero-3-phosphocholine + A + H2O. It catalyses the reaction (9Z,12Z)-octadecadienoate + AH2 + O2 = 9-hydroxy-(10E,12Z)-octadecadienoate + A + H2O. It carries out the reaction (9Z,12Z)-octadecadienoate + AH2 + O2 = 13-hydroxy-(9Z,11E)-octadecadienoate + A + H2O. The catalysed reaction is (5Z,8Z,11Z,14Z)-eicosatetraenoate + AH2 + O2 = (15R)-hydroxy-(5Z,8Z,11Z,13E)-eicosatetraenoate + A + H2O. The enzyme catalyses (5Z,8Z,11Z,14Z)-eicosatetraenoate + AH2 + O2 = (11R)-hydroxy-(5Z,8Z,12E,14Z)-eicosatetraenoate + A + H2O. It catalyses the reaction (5Z,8Z,11Z,14Z,17Z)-eicosapentaenoate + AH2 + O2 = (11R)-hydroxy-(5Z,8Z,12E,14Z,17Z)-eicosapentaenoate + A + H2O. It carries out the reaction (5Z,8Z,11Z,14Z,17Z)-eicosapentaenoate + AH2 + O2 = (18S)-hydroxy-(5Z,8Z,11Z,14Z,16E)-eicosapentaenoate + A + H2O. The catalysed reaction is (5Z,8Z,11Z,14Z,17Z)-eicosapentaenoate + AH2 + O2 = (18R)-hydroxy-(5Z,8Z,11Z,14Z,16E)-eicosapentaenoate + A + H2O. The enzyme catalyses (5Z,8Z,11Z,14Z,17Z)-eicosapentaenoate + AH2 + O2 = (15R)-hydroxy-(5Z,8Z,11Z,13E,17Z)-eicosapentaenoate + A + H2O. It catalyses the reaction (5Z,8Z,11Z,14Z,17Z)-eicosapentaenoate + AH2 + O2 = (15S)-hydroxy-(5Z,8Z,11Z,13E,17Z)-eicosapentaenoate + A + H2O. It carries out the reaction (7Z,10Z,13Z,16Z,19Z)-docosapentaenoate + AH2 + O2 = 13R-hydroxy-(7Z,10Z,14E,16Z,19Z)-docosapentaenoate + A + H2O. The catalysed reaction is (4Z,7Z,10Z,13Z,16Z,19Z)-docosahexaenoate + AH2 + O2 = 13-hydroxy-(4Z,7Z,10Z,14E,16Z,19Z)-docosahexaenoate + A + H2O. The enzyme catalyses (5S)-hydroxy-(6E,8Z,11Z,14Z)-eicosatetraenoate + AH2 + O2 = (5S,15R)-dihydroxy-(6E,8Z,11Z,13E)-eicosatetraenoate + A + H2O. It catalyses the reaction (4Z,7Z,10Z,13Z,16Z,19Z)-docosahexaenoate + AH2 + O2 = 17R-hydroxy-(4Z,7Z,10Z,13Z,15E,19Z)-docosahexaenoate + A + H2O. It carries out the reaction (5S)-hydroxy-(6E,8Z,11Z,14Z)-eicosatetraenoate + AH2 + O2 = (5S,15S)-dihydroxy-(6E,8Z,11Z,13E)-eicosatetraenoate + A + H2O. The catalysed reaction is (5S)-hydroxy-(6E,8Z,11Z,14Z)-eicosatetraenoate + AH2 + O2 = (5S,11R)-dihydroxy-(6E,8Z,12E,14Z)-eicosatetraenoate + A + H2O. The enzyme catalyses 2-(5Z,8Z,11Z,14Z-eicosatetraenoyl)-glycerol + 2 O2 = 2-glyceryl-prostaglandin G2. It catalyses the reaction 2-glyceryl-prostaglandin G2 + AH2 = 2-glyceryl-prostaglandin H2 + A + H2O. It carries out the reaction (5Z,8Z,11Z,14Z)-eicosatetraenoate + O2 = (15R)-hydroperoxy-(5Z,8Z,11Z,13E)-eicosatetraenoate. The catalysed reaction is (5Z,8Z,11Z,14Z)-eicosatetraenoate + O2 = 11R-hydroperoxy-(5Z,8Z,12E,14Z)-eicosatetraenoate. The enzyme catalyses (9Z,12Z)-octadecadienoate + AH2 + O2 = (9R)-hydroxy-(10E,12Z)-octadecadienoate + A + H2O. It catalyses the reaction (9Z,12Z)-octadecadienoate + AH2 + O2 = (9S)-hydroxy-(10E,12Z)-octadecadienoate + A + H2O. It carries out the reaction (9Z,12Z)-octadecadienoate + AH2 + O2 = (13S)-hydroxy-(9Z,11E)-octadecadienoate + A + H2O. The catalysed reaction is (9Z,12Z)-octadecadienoate + AH2 + O2 = (13R)-hydroxy-(9Z,11E)-octadecadienoate + A + H2O. It functions in the pathway lipid metabolism; prostaglandin biosynthesis. The cyclooxygenase activity is inhibited by nonsteroidal anti-inflammatory drugs (NSAIDs) including aspirin, ibuprofen, flurbiprofen, celecoxib, flufenamic, mefenamic and tolfenamic acids as well as by hydroperoxide scavenger erythrocyte glutathione peroxidase GPX1. Aspirin triggers enzyme acetylation turning off its ability to generate pro-inflammatory prostaglandins, but switches on its capacity to produce anti-inflammatory lipid mediators involved in inflammation resolution. Aspirin enhances lipoxygenase-type activity toward production of epimers with R stereochemistry such as 15R-HETE, 18R-HEPE, 15R-HEPE and 17R-HDHA. Atorvastatin, a cholesterol-lowering drug, triggers enzyme S-nitrosylation increasing production of 13-series resolvins (RvTs). Its function is as follows. Dual cyclooxygenase and peroxidase in the biosynthesis pathway of prostanoids, a class of C20 oxylipins mainly derived from arachidonate ((5Z,8Z,11Z,14Z)-eicosatetraenoate, AA, C20:4(n-6)), with a particular role in the inflammatory response. The cyclooxygenase activity oxygenates AA to the hydroperoxy endoperoxide prostaglandin G2 (PGG2), and the peroxidase activity reduces PGG2 to the hydroxy endoperoxide prostaglandin H2 (PGH2), the precursor of all 2-series prostaglandins and thromboxanes. This complex transformation is initiated by abstraction of hydrogen at carbon 13 (with S-stereochemistry), followed by insertion of molecular O2 to form the endoperoxide bridge between carbon 9 and 11 that defines prostaglandins. The insertion of a second molecule of O2 (bis-oxygenase activity) yields a hydroperoxy group in PGG2 that is then reduced to PGH2 by two electrons. Similarly catalyzes successive cyclooxygenation and peroxidation of dihomo-gamma-linoleate (DGLA, C20:3(n-6)) and eicosapentaenoate (EPA, C20:5(n-3)) to corresponding PGH1 and PGH3, the precursors of 1- and 3-series prostaglandins. In an alternative pathway of prostanoid biosynthesis, converts 2-arachidonoyl lysophopholipids to prostanoid lysophopholipids, which are then hydrolyzed by intracellular phospholipases to release free prostanoids. Metabolizes 2-arachidonoyl glycerol yielding the glyceryl ester of PGH2, a process that can contribute to pain response. Generates lipid mediators from n-3 and n-6 polyunsaturated fatty acids (PUFAs) via a lipoxygenase-type mechanism. Oxygenates PUFAs to hydroperoxy compounds and then reduces them to corresponding alcohols. Plays a role in the generation of resolution phase interaction products (resolvins) during both sterile and infectious inflammation. Metabolizes docosahexaenoate (DHA, C22:6(n-3)) to 17R-HDHA, a precursor of the D-series resolvins (RvDs). As a component of the biosynthetic pathway of E-series resolvins (RvEs), converts eicosapentaenoate (EPA, C20:5(n-3)) primarily to 18S-HEPE that is further metabolized by ALOX5 and LTA4H to generate 18S-RvE1 and 18S-RvE2. In vascular endothelial cells, converts docosapentaenoate (DPA, C22:5(n-3)) to 13R-HDPA, a precursor for 13-series resolvins (RvTs) shown to activate macrophage phagocytosis during bacterial infection. In activated leukocytes, contributes to oxygenation of hydroxyeicosatetraenoates (HETE) to diHETES (5,15-diHETE and 5,11-diHETE). Can also use linoleate (LA, (9Z,12Z)-octadecadienoate, C18:2(n-6)) as substrate and produce hydroxyoctadecadienoates (HODEs) in a regio- and stereospecific manner, being (9R)-HODE ((9R)-hydroxy-(10E,12Z)-octadecadienoate) and (13S)-HODE ((13S)-hydroxy-(9Z,11E)-octadecadienoate) its major products. During neuroinflammation, plays a role in neuronal secretion of specialized preresolving mediators (SPMs) 15R-lipoxin A4 that regulates phagocytic microglia. The polypeptide is Prostaglandin G/H synthase 2 (Homo sapiens (Human)).